Consider the following 553-residue polypeptide: CTP synthase (553 aa).

An amidoligase domain region spans residues 1–266 (MKYIFVTGGV…GKAVEDLLGL (266 aa)). Ser12 lines the CTP pocket. A UTP-binding site is contributed by Ser12. Position 13–18 (13–18 (SLGKGV)) interacts with ATP. Tyr53 is an L-glutamine binding site. Asp70 is an ATP binding site. Residues Asp70 and Glu140 each coordinate Mg(2+). Residues 147–149 (DIE), 187–192 (KTKPTQ), and Lys223 contribute to the CTP site. Residues 187–192 (KTKPTQ) and Lys223 each bind UTP. One can recognise a Glutamine amidotransferase type-1 domain in the interval 291-541 (TIAIAGKYTE…VAAALQSGPS (251 aa)). L-glutamine is bound at residue Gly353. Cys380 serves as the catalytic Nucleophile; for glutamine hydrolysis. Residues 381 to 384 (LGMQ), Glu404, and Arg464 contribute to the L-glutamine site. Residues His514 and Glu516 contribute to the active site.

The protein belongs to the CTP synthase family. Homotetramer.

The catalysed reaction is UTP + L-glutamine + ATP + H2O = CTP + L-glutamate + ADP + phosphate + 2 H(+). It carries out the reaction L-glutamine + H2O = L-glutamate + NH4(+). The enzyme catalyses UTP + NH4(+) + ATP = CTP + ADP + phosphate + 2 H(+). It functions in the pathway pyrimidine metabolism; CTP biosynthesis via de novo pathway; CTP from UDP: step 2/2. Allosterically activated by GTP, when glutamine is the substrate; GTP has no effect on the reaction when ammonia is the substrate. The allosteric effector GTP functions by stabilizing the protein conformation that binds the tetrahedral intermediate(s) formed during glutamine hydrolysis. Inhibited by the product CTP, via allosteric rather than competitive inhibition. Its function is as follows. Catalyzes the ATP-dependent amination of UTP to CTP with either L-glutamine or ammonia as the source of nitrogen. Regulates intracellular CTP levels through interactions with the four ribonucleotide triphosphates. This chain is CTP synthase, found in Deinococcus geothermalis (strain DSM 11300 / CIP 105573 / AG-3a).